The following is a 461-amino-acid chain: UDP-N-acetylmuramoylalanine--D-glutamate ligase (461 aa).

Residue 123–129 (GTNGKTT) coordinates ATP.

The protein belongs to the MurCDEF family.

Its subcellular location is the cytoplasm. The catalysed reaction is UDP-N-acetyl-alpha-D-muramoyl-L-alanine + D-glutamate + ATP = UDP-N-acetyl-alpha-D-muramoyl-L-alanyl-D-glutamate + ADP + phosphate + H(+). It participates in cell wall biogenesis; peptidoglycan biosynthesis. Cell wall formation. Catalyzes the addition of glutamate to the nucleotide precursor UDP-N-acetylmuramoyl-L-alanine (UMA). This chain is UDP-N-acetylmuramoylalanine--D-glutamate ligase, found in Natranaerobius thermophilus (strain ATCC BAA-1301 / DSM 18059 / JW/NM-WN-LF).